The sequence spans 581 residues: Protein SPT2 homolog (581 aa).

Residues 26–35 show a composition bias toward low complexity; the sequence is YYSTKYSPPK. Disordered regions lie at residues 26 to 50 and 145 to 495; these read YYST…NIQK and QEDK…EYDS. A coiled-coil region spans residues 36-76; sequence KQSKESKQLSSNIQKFLQKKEAEEAEKKRLERQKLNDLLAK. Positions 162–181 are enriched in basic and acidic residues; it reads SGTKERVKAAITREREEAKG. Polar residues-rich tracts occupy residues 182–197 and 204–213; these read NTRQ…SSAT and VARSYSTSKT. Basic and acidic residues-rich tracts occupy residues 218–236 and 256–312; these read NAEK…EQRR and LAEK…KETP. Positions 276 to 307 form a coiled coil; the sequence is ERLLSAREKRELEERQRQQEQRAQRLKMRESE. Low complexity predominate over residues 352 to 376; it reads SSASSTSLSSSNSHSSASRSSVSSS. The span at 447 to 461 shows a compositional bias: polar residues; sequence TRQTPSSDVQRSQGG. The segment covering 486-495 has biased composition (acidic residues); the sequence is DDDDEDEYDS.

Belongs to the SPT2 family.

The polypeptide is Protein SPT2 homolog (Drosophila melanogaster (Fruit fly)).